The primary structure comprises 160 residues: uncharacterized protein (160 aa).

4 helical membrane-spanning segments follow: residues 7–27 (IFLK…CIFL), 48–68 (LVFI…YQAF), 95–115 (AVTI…MAEI), and 121–141 (IIVI…FAAV).

Its subcellular location is the cell membrane. This is an uncharacterized protein from Bacillus subtilis (strain 168).